The following is a 92-amino-acid chain: Bombyxin A-7 (92 aa).

The N-terminal stretch at 1–19 is a signal peptide; that stretch reads MKLLLAIALMLTIVMWVST. Residue glutamine 20 is modified to Pyrrolidone carboxylic acid. Cystine bridges form between cysteine 29–cysteine 79, cysteine 41–cysteine 92, and cysteine 78–cysteine 83. The propeptide at 50–70 is c peptide like; sequence SDAQYASYGSAWLMPYSEGRG.

This sequence belongs to the insulin family. Heterodimer of a B chain and an A chain linked by two disulfide bonds.

It localises to the secreted. In terms of biological role, brain peptide responsible for activation of prothoracic glands to produce ecdysone in insects. This chain is Bombyxin A-7 (BBXA7), found in Bombyx mori (Silk moth).